We begin with the raw amino-acid sequence, 392 residues long: MPALKIPLFKMKDMILILCLLKMSSAVPAFPQQPGIPGMASLSLETMRQLGSLQGLNLLSQYSRFGFGKSFNSLWMNGLLPPHSSFPWMRPREHETQQPSLQPQQPGQKPFLQPTVVTSMQNAVQKGVPQPPIYQGHPPLQQAEGPMVEQQVAPSEKPPTTELPGMDFADLQDPPMFPIAHLISRGPMPQNKPSQLYPGIFYVTYGANQLGGRGDPLAYGAIFPGFGGMRPRLGGMPHNPDMGGDFTLEFDSPVAATKGPEKGEGGAQDSPVPEAHLADPESPALLSELAPGALEGLLANPEGNIPNLARGPAGRSRGFLRGVTPAAADPLMTPGLAEVYETYGADETTTLGLQEETTVDSTATPDTQHTLMPRNKAQQPQIKHDAWHFQEP.

The first 26 residues, methionine 1 to alanine 26, serve as a signal peptide directing secretion. Hydroxyproline is present on proline 37. The residue at position 43 (serine 43) is a Phosphoserine. Disordered regions lie at residues phenylalanine 86–lysine 109, threonine 247–proline 280, and threonine 349–proline 392. Positions glutamine 97–lysine 109 are enriched in low complexity. Over residues valine 359–glutamine 381 the composition is skewed to polar residues. The span at isoleucine 382–proline 392 shows a compositional bias: basic and acidic residues.

It belongs to the ameloblastin family.

Its subcellular location is the secreted. The protein localises to the extracellular space. The protein resides in the extracellular matrix. Functionally, involved in the mineralization and structural organization of enamel. The polypeptide is Ameloblastin (AMBN) (Bos taurus (Bovine)).